The chain runs to 378 residues: Chaperone protein DnaJ (378 aa).

One can recognise a J domain in the interval 5-70; that stretch reads DYYEVLGVAK…QKRAAYDQYG (66 aa). A CR-type zinc finger spans residues 138–216; it reads GYDTQIRVPS…CHGSGKVKET (79 aa). 8 residues coordinate Zn(2+): Cys-151, Cys-154, Cys-168, Cys-171, Cys-190, Cys-193, Cys-204, and Cys-207. 4 CXXCXGXG motif repeats span residues 151 to 158, 168 to 175, 190 to 197, and 204 to 211; these read CEVCHGSG, CPTCHGQG, CPKCHGTG, and CAHCHGSG.

The protein belongs to the DnaJ family. In terms of assembly, homodimer. Zn(2+) is required as a cofactor.

It localises to the cytoplasm. In terms of biological role, participates actively in the response to hyperosmotic and heat shock by preventing the aggregation of stress-denatured proteins and by disaggregating proteins, also in an autonomous, DnaK-independent fashion. Unfolded proteins bind initially to DnaJ; upon interaction with the DnaJ-bound protein, DnaK hydrolyzes its bound ATP, resulting in the formation of a stable complex. GrpE releases ADP from DnaK; ATP binding to DnaK triggers the release of the substrate protein, thus completing the reaction cycle. Several rounds of ATP-dependent interactions between DnaJ, DnaK and GrpE are required for fully efficient folding. Also involved, together with DnaK and GrpE, in the DNA replication of plasmids through activation of initiation proteins. This is Chaperone protein DnaJ from Burkholderia vietnamiensis (strain G4 / LMG 22486) (Burkholderia cepacia (strain R1808)).